We begin with the raw amino-acid sequence, 483 residues long: Membrane-bound lytic murein transglycosylase F (483 aa).

The signal sequence occupies residues Met1–Ala18. Residues Trp19 to Leu267 are non-LT domain. Positions His269 to Glu483 are LT domain. Glu312 is a catalytic residue. Residues Gln459–Glu483 form a disordered region. A compositionally biased stretch (basic and acidic residues) spans Ile473 to Glu483.

It in the N-terminal section; belongs to the bacterial solute-binding protein 3 family. In the C-terminal section; belongs to the transglycosylase Slt family.

It is found in the cell outer membrane. It carries out the reaction Exolytic cleavage of the (1-&gt;4)-beta-glycosidic linkage between N-acetylmuramic acid (MurNAc) and N-acetylglucosamine (GlcNAc) residues in peptidoglycan, from either the reducing or the non-reducing ends of the peptidoglycan chains, with concomitant formation of a 1,6-anhydrobond in the MurNAc residue.. Murein-degrading enzyme that degrades murein glycan strands and insoluble, high-molecular weight murein sacculi, with the concomitant formation of a 1,6-anhydromuramoyl product. Lytic transglycosylases (LTs) play an integral role in the metabolism of the peptidoglycan (PG) sacculus. Their lytic action creates space within the PG sacculus to allow for its expansion as well as for the insertion of various structures such as secretion systems and flagella. This Actinobacillus pleuropneumoniae serotype 7 (strain AP76) protein is Membrane-bound lytic murein transglycosylase F.